Consider the following 319-residue polypeptide: Methionyl-tRNA formyltransferase (319 aa).

Residue 112–115 (SILP) participates in (6S)-5,6,7,8-tetrahydrofolate binding.

It belongs to the Fmt family.

The catalysed reaction is L-methionyl-tRNA(fMet) + (6R)-10-formyltetrahydrofolate = N-formyl-L-methionyl-tRNA(fMet) + (6S)-5,6,7,8-tetrahydrofolate + H(+). In terms of biological role, attaches a formyl group to the free amino group of methionyl-tRNA(fMet). The formyl group appears to play a dual role in the initiator identity of N-formylmethionyl-tRNA by promoting its recognition by IF2 and preventing the misappropriation of this tRNA by the elongation apparatus. The protein is Methionyl-tRNA formyltransferase of Shewanella denitrificans (strain OS217 / ATCC BAA-1090 / DSM 15013).